The primary structure comprises 107 residues: Large ribosomal subunit protein P1 (107 aa).

Residues 67–82 (GPASAAPAGAAGAAAP) show a composition bias toward low complexity. Residues 67–107 (GPASAAPAGAAGAAAPAEEKAEEKEEEKEESDEDMGFGLFD) form a disordered region. Residues 90–101 (KEEEKEESDEDM) are compositionally biased toward acidic residues.

This sequence belongs to the eukaryotic ribosomal protein P1/P2 family. As to quaternary structure, P1 and P2 exist as dimers at the large ribosomal subunit.

The protein localises to the cytoplasm. Functionally, plays an important role in the elongation step of protein synthesis. This chain is Large ribosomal subunit protein P1, found in Penicillium crustosum (Blue mold fungus).